Consider the following 143-residue polypeptide: MGKPRGLRTARKLKNHRREQRWHDKDYKKSHLGTRWKSNPFGGASHAKGIVLEKVGVEAKQPNSAIRKCVRVQLIKNGKKITAFVPRDGCLNFIEENDEVLVAGFGRKGHAVGDIPGVRFKVVKVASVSLLALYKQKKERPRS.

The span at 1–20 (MGKPRGLRTARKLKNHRREQ) shows a compositional bias: basic residues. The disordered stretch occupies residues 1–28 (MGKPRGLRTARKLKNHRREQRWHDKDYK). At Pro62 the chain carries Hydroxyproline.

It belongs to the universal ribosomal protein uS12 family. In terms of assembly, component of the 40S small ribosomal subunit.

The protein resides in the cytoplasm. It localises to the cytosol. It is found in the rough endoplasmic reticulum. The sequence is that of Small ribosomal subunit protein uS12 (RPS23) from Lumbricus rubellus (Humus earthworm).